A 348-amino-acid polypeptide reads, in one-letter code: MADDRKAALDAALKKIEKNYGKGAIMKLGEKVDQQISTIPSGSLALDVALGVGGYPRGRIVEVYGPESSGKTTVALHAIAEVQKGGGTAAFIDAEHALDPQYAQKLGVNIDDLLLSQPDTGEQGLEIADALVSSGAVDIVVIDSVAALVPRAEIDGEMGDTHVGLQARLMSQALRKLSGSINKTKTIAIFINQIREKVGIMFGNPETTPGGRALKFYSTIRLEVRRAEQLKSGTDIIGNRTKIKVVKNKVAPPFKVAEVDMMYGQGISQEGELLDMAVEQDIVDKSGAWYAYKGDRIGQGRENAKNYMREHQEMMMEVSARVRDAYGIGTGETVIEIEDAQEELPLDE.

65 to 72 is a binding site for ATP; the sequence is GPESSGKT.

The protein belongs to the RecA family.

It is found in the cytoplasm. In terms of biological role, can catalyze the hydrolysis of ATP in the presence of single-stranded DNA, the ATP-dependent uptake of single-stranded DNA by duplex DNA, and the ATP-dependent hybridization of homologous single-stranded DNAs. It interacts with LexA causing its activation and leading to its autocatalytic cleavage. The polypeptide is Protein RecA (Enterococcus gallinarum).